The sequence spans 607 residues: Glutamine--fructose-6-phosphate aminotransferase [isomerizing] (607 aa).

The active-site Nucleophile; for GATase activity is the C2. The region spanning 2 to 217 is the Glutamine amidotransferase type-2 domain; it reads CGIIGIIGND…DGDWAVLTRN (216 aa). 2 SIS domains span residues 283 to 422 and 455 to 597; these read IGID…ARGA and VCHD…VDQP. Residue K602 is the For Fru-6P isomerization activity of the active site.

Homodimer.

It is found in the cytoplasm. The catalysed reaction is D-fructose 6-phosphate + L-glutamine = D-glucosamine 6-phosphate + L-glutamate. Catalyzes the first step in hexosamine metabolism, converting fructose-6P into glucosamine-6P using glutamine as a nitrogen source. The polypeptide is Glutamine--fructose-6-phosphate aminotransferase [isomerizing] (Brucella suis biovar 1 (strain 1330)).